Consider the following 830-residue polypeptide: Post-transcriptional regulator MKT1 (830 aa).

Residue Lys4 forms a Glycyl lysine isopeptide (Lys-Gly) (interchain with G-Cter in ubiquitin) linkage. The segment at 130–380 is interaction with PBP1; sequence RSRGWTQWNN…SPATTVTKNA (251 aa). The interval 347–400 is disordered; that stretch reads DSEKNNKDGKKSNLSSPSSASSSASPATTVTKNASEKLTYEKSSTKEVRKPRDI. Residues Ser358, Ser362, and Ser371 each carry the phosphoserine modification. The segment covering 361 to 373 has biased composition (low complexity); the sequence is SSPSSASSSASPA. Positions 380 to 400 are enriched in basic and acidic residues; that stretch reads ASEKLTYEKSSTKEVRKPRDI.

The protein belongs to the XPG/RAD2 endonuclease family. In terms of assembly, interacts (via C-terminus) with PBP1 (via C-terminus).

It localises to the cytoplasm. The protein localises to the cytosol. In terms of biological role, involved in 3'-UTR mediated RNA regulation. Binds to RNA-binding and RNA regulatory proteins. Complexes with PAB1-binding protein to promote mRNA interactions with poly(A)-binding protein. Promotes mating-type switching in mother cells by positively regulating HO expression. This Saccharomyces cerevisiae (strain ATCC 204508 / S288c) (Baker's yeast) protein is Post-transcriptional regulator MKT1 (MKT1).